The following is a 60-amino-acid chain: Large ribosomal subunit protein uL30 (60 aa).

This sequence belongs to the universal ribosomal protein uL30 family. As to quaternary structure, part of the 50S ribosomal subunit.

The polypeptide is Large ribosomal subunit protein uL30 (Polaromonas sp. (strain JS666 / ATCC BAA-500)).